Consider the following 333-residue polypeptide: Eukaryotic translation initiation factor 3 subunit H-B (333 aa).

The region spanning 20 to 154 (IQIEGLVVMK…LKAYRLTPKL (135 aa)) is the MPN domain. A disordered region spans residues 249 to 295 (SKQQQQKHQYVQRRQQENAQRQSRGEPPLPEEDLTKMFKPPQPPPRM). Positions 250–261 (KQQQQKHQYVQR) are enriched in low complexity.

The protein belongs to the eIF-3 subunit H family. As to quaternary structure, component of the eukaryotic translation initiation factor 3 (eIF-3) complex, which is composed of 13 subunits: eif3a, eif3b, eif3c, eif3d, eif3e, eif3f, eif3g, eif3h, eif3i, eif3j, eif3k, eif3l and eif3m.

It is found in the cytoplasm. In terms of biological role, component of the eukaryotic translation initiation factor 3 (eIF-3) complex, which is involved in protein synthesis of a specialized repertoire of mRNAs and, together with other initiation factors, stimulates binding of mRNA and methionyl-tRNAi to the 40S ribosome. The eIF-3 complex specifically targets and initiates translation of a subset of mRNAs involved in cell proliferation. The polypeptide is Eukaryotic translation initiation factor 3 subunit H-B (eif3hb) (Danio rerio (Zebrafish)).